Reading from the N-terminus, the 549-residue chain is Oxygen-dependent choline dehydrogenase (549 aa).

Position 4-33 (4-33 (DFVIIGSGSAGSALAYRLSEDGRNSVIVLE)) interacts with FAD. The active-site Proton acceptor is the histidine 465.

It belongs to the GMC oxidoreductase family. FAD is required as a cofactor.

The protein resides in the cell membrane. The catalysed reaction is choline + A = betaine aldehyde + AH2. It carries out the reaction betaine aldehyde + NAD(+) + H2O = glycine betaine + NADH + 2 H(+). It functions in the pathway amine and polyamine biosynthesis; betaine biosynthesis via choline pathway; betaine aldehyde from choline (cytochrome c reductase route): step 1/1. Its function is as follows. Involved in the biosynthesis of the osmoprotectant glycine betaine. Catalyzes the oxidation of choline to betaine aldehyde and betaine aldehyde to glycine betaine at the same rate. The chain is Oxygen-dependent choline dehydrogenase from Rhizobium meliloti (strain 1021) (Ensifer meliloti).